The sequence spans 257 residues: Imidazole glycerol phosphate synthase subunit HisF (257 aa).

Catalysis depends on residues D12 and D131.

It belongs to the HisA/HisF family. In terms of assembly, heterodimer of HisH and HisF.

The protein resides in the cytoplasm. It catalyses the reaction 5-[(5-phospho-1-deoxy-D-ribulos-1-ylimino)methylamino]-1-(5-phospho-beta-D-ribosyl)imidazole-4-carboxamide + L-glutamine = D-erythro-1-(imidazol-4-yl)glycerol 3-phosphate + 5-amino-1-(5-phospho-beta-D-ribosyl)imidazole-4-carboxamide + L-glutamate + H(+). The protein operates within amino-acid biosynthesis; L-histidine biosynthesis; L-histidine from 5-phospho-alpha-D-ribose 1-diphosphate: step 5/9. Functionally, IGPS catalyzes the conversion of PRFAR and glutamine to IGP, AICAR and glutamate. The HisF subunit catalyzes the cyclization activity that produces IGP and AICAR from PRFAR using the ammonia provided by the HisH subunit. The chain is Imidazole glycerol phosphate synthase subunit HisF from Cellvibrio japonicus (strain Ueda107) (Pseudomonas fluorescens subsp. cellulosa).